A 533-amino-acid chain; its full sequence is Light-independent protochlorophyllide reductase subunit B (533 aa).

A [4Fe-4S] cluster-binding site is contributed by D36. Residue D292 is the Proton donor of the active site. 428–429 (GL) serves as a coordination point for substrate.

It belongs to the ChlB/BchB/BchZ family. Protochlorophyllide reductase is composed of three subunits; BchL, BchN and BchB. Forms a heterotetramer of two BchB and two BchN subunits. The cofactor is [4Fe-4S] cluster.

It carries out the reaction chlorophyllide a + oxidized 2[4Fe-4S]-[ferredoxin] + 2 ADP + 2 phosphate = protochlorophyllide a + reduced 2[4Fe-4S]-[ferredoxin] + 2 ATP + 2 H2O. It participates in porphyrin-containing compound metabolism; bacteriochlorophyll biosynthesis (light-independent). In terms of biological role, component of the dark-operative protochlorophyllide reductase (DPOR) that uses Mg-ATP and reduced ferredoxin to reduce ring D of protochlorophyllide (Pchlide) to form chlorophyllide a (Chlide). This reaction is light-independent. The NB-protein (BchN-BchB) is the catalytic component of the complex. The protein is Light-independent protochlorophyllide reductase subunit B of Prosthecochloris aestuarii (strain DSM 271 / SK 413).